The chain runs to 85 residues: Translational regulator CsrA (85 aa).

It belongs to the CsrA/RsmA family. Homodimer; the beta-strands of each monomer intercalate to form a hydrophobic core, while the alpha-helices form wings that extend away from the core.

The protein resides in the cytoplasm. A translational regulator that binds mRNA to regulate translation initiation and/or mRNA stability. Usually binds in the 5'-UTR at or near the Shine-Dalgarno sequence preventing ribosome-binding, thus repressing translation. Its main target seems to be the major flagellin gene, while its function is anatagonized by FliW. The polypeptide is Translational regulator CsrA (Leifsonia xyli subsp. xyli (strain CTCB07)).